The chain runs to 123 residues: rRNA-processing protein cgr-1 (123 aa).

Residues 1-13 (MSSTTTTTQTTSQ) are compositionally biased toward low complexity. Disordered regions lie at residues 1-47 (MSST…GLTS) and 85-123 (EKRA…LINS). Residues 49 to 110 (EKRAKERQLL…EKMHKKRVER (62 aa)) adopt a coiled-coil conformation. Positions 85 to 102 (EKRAKKEEKERYEKMAEK) are enriched in basic and acidic residues. A compositionally biased stretch (basic residues) spans 103-123 (MHKKRVERLKRKEKRNKLINS).

The protein belongs to the CGR1 family.

It localises to the nucleus. Its subcellular location is the nucleolus. Involved in nucleolar integrity and required for processing of the pre-rRNA for the 60S ribosome subunit. This is rRNA-processing protein cgr-1 (cgr-1) from Neurospora crassa (strain ATCC 24698 / 74-OR23-1A / CBS 708.71 / DSM 1257 / FGSC 987).